The following is a 77-amino-acid chain: MNPIVEFCVNNLASGADAAFAKLDADDSLDVIEYDCLTYCDLCATSLFALVDGEVVRGETAEELVANIYTFLEENPF.

This sequence belongs to the UPF0349 family.

This chain is UPF0349 protein lin2491, found in Listeria innocua serovar 6a (strain ATCC BAA-680 / CLIP 11262).